A 74-amino-acid polypeptide reads, in one-letter code: WAP four-disulfide core domain protein 18 (74 aa).

The first 24 residues, 1–24 (MKTATVFVLVALIFMTMTTAWALS), serve as a signal peptide directing secretion. In terms of domain architecture, WAP spans 26 to 73 (PKEKPGACPKPPPRSFGTCDERCTGDGSCSGNMKCCSNGCGHACKPPV).

The protein resides in the secreted. Functionally, could have proteinase inhibiting capacity. The polypeptide is WAP four-disulfide core domain protein 18 (WFDC18) (Bos taurus (Bovine)).